A 92-amino-acid polypeptide reads, in one-letter code: Small ribosomal subunit protein bS20 (92 aa).

The interval 1-25 (MANSAQARKRARQAAKANSHNSALR) is disordered.

This sequence belongs to the bacterial ribosomal protein bS20 family.

In terms of biological role, binds directly to 16S ribosomal RNA. The chain is Small ribosomal subunit protein bS20 from Paraburkholderia phytofirmans (strain DSM 17436 / LMG 22146 / PsJN) (Burkholderia phytofirmans).